The sequence spans 282 residues: HTH-type transcriptional activator RhaR (282 aa).

The 99-residue stretch at 179-277 (DKLITRLAAS…GMTPSQWRHL (99 aa)) folds into the HTH araC/xylS-type domain. 2 DNA-binding regions (H-T-H motif) span residues 196–217 (DKFCDEASCSERVLRQQFRQQT) and 244–267 (ISDISTECGFEDSNYFSVVFTRET).

In terms of assembly, binds DNA as a dimer.

Its subcellular location is the cytoplasm. In terms of biological role, activates expression of the rhaSR operon in response to L-rhamnose. The sequence is that of HTH-type transcriptional activator RhaR from Shigella flexneri serotype 5b (strain 8401).